A 51-amino-acid chain; its full sequence is MGDVPLKIDSEKDFMKFFSTAPVIALVFFTLTAGFLVELNRFFPDILFFPY.

Residues 17 to 37 form a helical membrane-spanning segment; it reads FFSTAPVIALVFFTLTAGFLV.

The protein belongs to the PsaJ family.

The protein resides in the cellular thylakoid membrane. May help in the organization of the PsaE and PsaF subunits. The sequence is that of Photosystem I reaction center subunit IX from Acaryochloris marina (strain MBIC 11017).